Reading from the N-terminus, the 406-residue chain is MSAPHAQVERADFDRYMVPNYAPAAFIPVRGEGSRVWDQSGRELIDFAGGIAVTSLGHAHPALVKALTEQAQRIWHVSNVFTNEPALRLARKLVDATFAERVFLANSGAEANEAAFKLARRYANDVYGPQKYEIIAASNSFHGRTLFTVNVGGQPKYSDGFGPKFEGITHVPYNDLEALKAAISDKTCAVVLEPIQGEGGVLPAQQAYLEGARKLCDEHNALLVFDEVQSGMGRVGELFAYMHYGVVPDILSSAKSLGGGFPIGAMLTTGEIAKHLSVGTHGTTYGGNPLASAVAEAALDVINTPEVLDGVKAKHERFKSRLQKIGQEYGIFDEIRGMGLLIGAALTDEWKGKARDVLNAAEKEAVMVLQASPDVVRFAPSLVIDDAEIDEGLERFERAVAKLVRG.

Residues 108–109 (GA) and F141 contribute to the pyridoxal 5'-phosphate site. R144 is a binding site for N(2)-acetyl-L-ornithine. Pyridoxal 5'-phosphate is bound at residue 226-229 (DEVQ). K255 is modified (N6-(pyridoxal phosphate)lysine). T283 lines the N(2)-acetyl-L-ornithine pocket. T284 provides a ligand contact to pyridoxal 5'-phosphate.

This sequence belongs to the class-III pyridoxal-phosphate-dependent aminotransferase family. ArgD subfamily. In terms of assembly, homodimer. It depends on pyridoxal 5'-phosphate as a cofactor.

It localises to the cytoplasm. It carries out the reaction N(2)-succinyl-L-ornithine + 2-oxoglutarate = N-succinyl-L-glutamate 5-semialdehyde + L-glutamate. The enzyme catalyses N(2)-acetyl-L-ornithine + 2-oxoglutarate = N-acetyl-L-glutamate 5-semialdehyde + L-glutamate. Its pathway is amino-acid biosynthesis; L-arginine biosynthesis; N(2)-acetyl-L-ornithine from L-glutamate: step 4/4. It functions in the pathway amino-acid degradation; L-arginine degradation via AST pathway; L-glutamate and succinate from L-arginine: step 3/5. Transaminates both N(2)-acetylornithine and N(2)-succinylornithine. The polypeptide is Succinylornithine transaminase/acetylornithine aminotransferase (aruC) (Pseudomonas aeruginosa (strain ATCC 15692 / DSM 22644 / CIP 104116 / JCM 14847 / LMG 12228 / 1C / PRS 101 / PAO1)).